The sequence spans 205 residues: Golgi apparatus membrane protein TVP23 homolog B (205 aa).

Position 1 is an N-acetylmethionine (methionine 1). Residues 1 to 21 are compositionally biased toward acidic residues; sequence MLSQDSNDDTEDVSLFDAEEE. A disordered region spans residues 1–27; the sequence is MLSQDSNDDTEDVSLFDAEEETTNRPR. 4 helical membrane-spanning segments follow: residues 34 to 53, 54 to 72, 126 to 146, and 152 to 172; these read PVAS…VYLL, CELL…ILLL, IFWL…FSAL, and KWLA…YGYI.

The protein belongs to the TVP23 family.

The protein localises to the membrane. The chain is Golgi apparatus membrane protein TVP23 homolog B (Tvp23b) from Mus musculus (Mouse).